A 192-amino-acid polypeptide reads, in one-letter code: Cysteine and glycine-rich protein 1 (192 aa).

Positions 10-61 constitute an LIM zinc-binding 1 domain; it reads CGVCQKAVYFAEEVQCEGSSFHKSCFLCMVCKKNLDSTTVAVHGDEIYCKSC. The Nuclear localization signal signature appears at 64–69; the sequence is KKYGPK. Residues 118–169 form the LIM zinc-binding 2 domain; sequence CPRCGQAVYAAEKVIGAGKSWHKSCFRCAKCGKSLESTTLADKDGEIYCKGC.

As to quaternary structure, probable monomer. Interacts with ZYX. Most prominent in tissues that are enriched in smooth muscle cells, such as gizzard, stomach, and intestine. Lower level in the heart, no expression in liver, skeletal muscle, or brain.

The protein localises to the nucleus. The protein resides in the cytoplasm. It localises to the cytoskeleton. Its function is as follows. Heat stable protein, that interacts with zyxin/ZYX. May be a component of a signal transduction pathway that mediates adhesion-stimulated changes in gene expression. The polypeptide is Cysteine and glycine-rich protein 1 (CSRP1) (Gallus gallus (Chicken)).